The primary structure comprises 715 residues: uncharacterized protein (715 aa).

This is an uncharacterized protein from Mycobacterium tuberculosis (strain CDC 1551 / Oshkosh).